Consider the following 148-residue polypeptide: 3-dehydroquinate dehydratase (148 aa).

The active-site Proton acceptor is the Tyr26. 3 residues coordinate substrate: Asn77, His83, and Asp90. His103 (proton donor) is an active-site residue. Residues 104-105 and Arg114 contribute to the substrate site; that span reads LS.

The protein belongs to the type-II 3-dehydroquinase family. In terms of assembly, homododecamer.

The enzyme catalyses 3-dehydroquinate = 3-dehydroshikimate + H2O. Its pathway is metabolic intermediate biosynthesis; chorismate biosynthesis; chorismate from D-erythrose 4-phosphate and phosphoenolpyruvate: step 3/7. In terms of biological role, catalyzes a trans-dehydration via an enolate intermediate. The polypeptide is 3-dehydroquinate dehydratase (aroQ) (Pasteurella multocida (strain Pm70)).